We begin with the raw amino-acid sequence, 154 residues long: Crossover junction endodeoxyribonuclease RuvC (154 aa).

Residues Asp7, Glu67, and Asp139 contribute to the active site. Mg(2+) contacts are provided by Asp7, Glu67, and Asp139.

This sequence belongs to the RuvC family. Homodimer which binds Holliday junction (HJ) DNA. The HJ becomes 2-fold symmetrical on binding to RuvC with unstacked arms; it has a different conformation from HJ DNA in complex with RuvA. In the full resolvosome a probable DNA-RuvA(4)-RuvB(12)-RuvC(2) complex forms which resolves the HJ. The cofactor is Mg(2+).

Its subcellular location is the cytoplasm. The enzyme catalyses Endonucleolytic cleavage at a junction such as a reciprocal single-stranded crossover between two homologous DNA duplexes (Holliday junction).. Its function is as follows. The RuvA-RuvB-RuvC complex processes Holliday junction (HJ) DNA during genetic recombination and DNA repair. Endonuclease that resolves HJ intermediates. Cleaves cruciform DNA by making single-stranded nicks across the HJ at symmetrical positions within the homologous arms, yielding a 5'-phosphate and a 3'-hydroxyl group; requires a central core of homology in the junction. The consensus cleavage sequence is 5'-(A/T)TT(C/G)-3'. Cleavage occurs on the 3'-side of the TT dinucleotide at the point of strand exchange. HJ branch migration catalyzed by RuvA-RuvB allows RuvC to scan DNA until it finds its consensus sequence, where it cleaves and resolves the cruciform DNA. The chain is Crossover junction endodeoxyribonuclease RuvC from Parasynechococcus marenigrum (strain WH8102).